Reading from the N-terminus, the 292-residue chain is MSAEPLLPTHNGSQGGEVRSPDQKFIVIRFSDVSVRDLQLNISNVPFSNINTHWLRRMCRELRPQQTQKRRLKFIRNGSILNTHSKIAEELTHYFDTANNSNVATGTSVAPEQNNYYIHCIIGTEELTQAELANEDLKDDATPSNDSMTTQAIGFDRLRSVGFTEQEIELLRQQFRATYGDLEEEEERLAQNGNRDDEGHDIRQLEEQWMESGSGTAQGNGAGGGNEDRFNSVPIANIKHNKDLLLGICVGFFFGVFGILLMKFDGLFNRRQKMAIFAGVIVNVMFCLVRGF.

Topologically, residues 1–243 (MSAEPLLPTH…PIANIKHNKD (243 aa)) are extracellular. N-linked (GlcNAc...) asparagine glycosylation is found at asparagine 11, asparagine 41, asparagine 77, asparagine 99, and asparagine 145. The helical transmembrane segment at 244–264 (LLLGICVGFFFGVFGILLMKF) threads the bilayer. Over 265 to 273 (DGLFNRRQK) the chain is Cytoplasmic. Residues 274 to 291 (MAIFAGVIVNVMFCLVRG) traverse the membrane as a helical segment. Phenylalanine 292 is a topological domain (extracellular).

It belongs to the dsc3 family. In terms of assembly, component of the DSC E3 ligase complexes composed of at least TUL1, DSC2, DSC3, UBX3, CDC48 as well as VLD1 for the vacuole-localized complex or GLD1 for the Golgi/endosome-localized complex.

The protein localises to the endoplasmic reticulum membrane. In terms of biological role, component of the DSC E3 ubiquitin ligase complexes that tag proteins present in Golgi, endosome and vacuole membranes and function in protein homeostasis under non-stress conditions and support a role in protein quality control. Involved in endocytic protein trafficking. The chain is DSC E3 ubiquitin ligase complex subunit 3 from Saccharomyces cerevisiae (strain ATCC 204508 / S288c) (Baker's yeast).